The chain runs to 413 residues: CinA-like protein (413 aa).

It belongs to the CinA family.

The protein is CinA-like protein of Geotalea daltonii (strain DSM 22248 / JCM 15807 / FRC-32) (Geobacter daltonii).